The following is a 577-amino-acid chain: Arginine--tRNA ligase (577 aa).

The 'HIGH' region motif lies at 122–132 (PNVAKEMHVGH).

This sequence belongs to the class-I aminoacyl-tRNA synthetase family. As to quaternary structure, monomer.

Its subcellular location is the cytoplasm. The enzyme catalyses tRNA(Arg) + L-arginine + ATP = L-arginyl-tRNA(Arg) + AMP + diphosphate. The protein is Arginine--tRNA ligase of Shigella flexneri.